The primary structure comprises 1386 residues: DNA-directed RNA polymerase subunit beta'' (1386 aa).

4 residues coordinate Zn(2+): C224, C294, C301, and C304.

This sequence belongs to the RNA polymerase beta' chain family. RpoC2 subfamily. In terms of assembly, in plastids the minimal PEP RNA polymerase catalytic core is composed of four subunits: alpha, beta, beta', and beta''. When a (nuclear-encoded) sigma factor is associated with the core the holoenzyme is formed, which can initiate transcription. Requires Zn(2+) as cofactor.

The protein localises to the plastid. The protein resides in the chloroplast. It carries out the reaction RNA(n) + a ribonucleoside 5'-triphosphate = RNA(n+1) + diphosphate. DNA-dependent RNA polymerase catalyzes the transcription of DNA into RNA using the four ribonucleoside triphosphates as substrates. This Acorus calamus (Sweet flag) protein is DNA-directed RNA polymerase subunit beta''.